The chain runs to 199 residues: Imidazole glycerol phosphate synthase subunit HisH 2 (199 aa).

A Glutamine amidotransferase type-1 domain is found at 1-199; that stretch reads MIAVIDVSGN…NNFLSLESKC (199 aa). Cysteine 76 functions as the Nucleophile in the catalytic mechanism. Catalysis depends on residues histidine 177 and glutamate 179.

As to quaternary structure, heterodimer of HisH and HisF.

The protein resides in the cytoplasm. The enzyme catalyses 5-[(5-phospho-1-deoxy-D-ribulos-1-ylimino)methylamino]-1-(5-phospho-beta-D-ribosyl)imidazole-4-carboxamide + L-glutamine = D-erythro-1-(imidazol-4-yl)glycerol 3-phosphate + 5-amino-1-(5-phospho-beta-D-ribosyl)imidazole-4-carboxamide + L-glutamate + H(+). It catalyses the reaction L-glutamine + H2O = L-glutamate + NH4(+). Its pathway is amino-acid biosynthesis; L-histidine biosynthesis; L-histidine from 5-phospho-alpha-D-ribose 1-diphosphate: step 5/9. Functionally, IGPS catalyzes the conversion of PRFAR and glutamine to IGP, AICAR and glutamate. The HisH subunit provides the glutamine amidotransferase activity that produces the ammonia necessary to HisF for the synthesis of IGP and AICAR. This is Imidazole glycerol phosphate synthase subunit HisH 2 from Legionella pneumophila (strain Lens).